The sequence spans 301 residues: Protoheme IX farnesyltransferase 1 (301 aa).

The next 9 membrane-spanning stretches (helical) occupy residues 29–49, 51–71, 101–121, 123–143, 150–170, 177–197, 223–243, 244–264, and 274–294; these read VVAL…PHAV, VQPL…AAAL, ALIF…SLVN, LTAW…TAYL, NIVI…TAVT, ALLL…ALAI, CILL…LVGM, CGPV…YKAW, and LAMQ…MALL.

This sequence belongs to the UbiA prenyltransferase family. Protoheme IX farnesyltransferase subfamily.

It localises to the cell inner membrane. It carries out the reaction heme b + (2E,6E)-farnesyl diphosphate + H2O = Fe(II)-heme o + diphosphate. Its pathway is porphyrin-containing compound metabolism; heme O biosynthesis; heme O from protoheme: step 1/1. Its function is as follows. Converts heme B (protoheme IX) to heme O by substitution of the vinyl group on carbon 2 of heme B porphyrin ring with a hydroxyethyl farnesyl side group. This is Protoheme IX farnesyltransferase 1 from Shewanella baltica (strain OS195).